The following is a 327-amino-acid chain: DNA-directed RNA polymerase subunit alpha (327 aa).

The tract at residues methionine 1–glutamate 233 is alpha N-terminal domain (alpha-NTD). Positions lysine 265–lysine 327 are alpha C-terminal domain (alpha-CTD).

Belongs to the RNA polymerase alpha chain family. In plastids the minimal PEP RNA polymerase catalytic core is composed of four subunits: alpha, beta, beta', and beta''. When a (nuclear-encoded) sigma factor is associated with the core the holoenzyme is formed, which can initiate transcription.

Its subcellular location is the plastid. The protein localises to the chloroplast. It catalyses the reaction RNA(n) + a ribonucleoside 5'-triphosphate = RNA(n+1) + diphosphate. DNA-dependent RNA polymerase catalyzes the transcription of DNA into RNA using the four ribonucleoside triphosphates as substrates. In Olimarabidopsis pumila (Dwarf rocket), this protein is DNA-directed RNA polymerase subunit alpha.